A 178-amino-acid chain; its full sequence is MSRIGKRPVTVPSGIEVSLDGTTLVAKKGNLEKRLETHGRVGINIDGSEVTFTRVGDEKQDAAFWGTYRALFNNIMVGLDKGYSKSLEINGVGYRAAVEGKTLKLQLGFSHDVNFEIPEGLDIKVDKNIITVSGTDKQAVGQAAAEIRAYRPPEPYKGKGVKYTDEVIIRKAGKAAGK.

The protein belongs to the universal ribosomal protein uL6 family. As to quaternary structure, part of the 50S ribosomal subunit.

Its function is as follows. This protein binds to the 23S rRNA, and is important in its secondary structure. It is located near the subunit interface in the base of the L7/L12 stalk, and near the tRNA binding site of the peptidyltransferase center. The sequence is that of Large ribosomal subunit protein uL6 from Sulfurovum sp. (strain NBC37-1).